The chain runs to 297 residues: ER membrane protein complex subunit 2 (297 aa).

Ala2 bears the N-acetylalanine mark. TPR repeat units follow at residues 87–120, 155–188, and 192–225; these read HRVK…DPTN, QEAW…NPHN, and CQQY…NNRN. Position 255 is an N6-acetyllysine (Lys255).

This sequence belongs to the EMC2 family. Component of the ER membrane protein complex (EMC). Interacts with WNK1 (via amphipathic alpha-helix region); promoting the ER membrane protein complex assembly by preventing EMC2 ubiquitination. In terms of processing, ubiquitinated when soluble in the cytoplasm, leading to its degradation by the proteasome. Interaction with EMC2 prevents its ubiquitination and degradation.

The protein resides in the endoplasmic reticulum membrane. In terms of biological role, part of the endoplasmic reticulum membrane protein complex (EMC) that enables the energy-independent insertion into endoplasmic reticulum membranes of newly synthesized membrane proteins. Preferentially accommodates proteins with transmembrane domains that are weakly hydrophobic or contain destabilizing features such as charged and aromatic residues. Involved in the cotranslational insertion of multi-pass membrane proteins in which stop-transfer membrane-anchor sequences become ER membrane spanning helices. It is also required for the post-translational insertion of tail-anchored/TA proteins in endoplasmic reticulum membranes. By mediating the proper cotranslational insertion of N-terminal transmembrane domains in an N-exo topology, with translocated N-terminus in the lumen of the ER, controls the topology of multi-pass membrane proteins like the G protein-coupled receptors. By regulating the insertion of various proteins in membranes, it is indirectly involved in many cellular processes. This Homo sapiens (Human) protein is ER membrane protein complex subunit 2.